We begin with the raw amino-acid sequence, 745 residues long: Exocyst complex component 3 (745 aa).

K28 is modified (N6-acetyllysine).

Belongs to the SEC6 family. In terms of assembly, the exocyst complex is composed of EXOC1, EXOC2, EXOC3, EXOC4, EXOC5, EXOC6, EXOC7 and EXOC8. Interacts with EXOC3L1. Interacts with BIRC6/bruce. Interacts with MYRIP. Interacts with SLC6A9. Expressed in epididymis (at protein level).

It localises to the cytoplasm. The protein resides in the perinuclear region. It is found in the cell projection. Its subcellular location is the growth cone. The protein localises to the midbody. It localises to the golgi apparatus. The protein resides in the neuron projection. Component of the exocyst complex involved in the docking of exocytic vesicles with fusion sites on the plasma membrane. This is Exocyst complex component 3 (EXOC3) from Homo sapiens (Human).